The primary structure comprises 132 residues: Sec-independent protein translocase protein TatB (132 aa).

Residues 2 to 22 traverse the membrane as a helical segment; it reads FDGIGFMELLLIGILGLVVLG. Composition is skewed to polar residues over residues 86 to 95 and 116 to 132; these read LKQAAQSVNR and IAET…KNNG. The segment at 86–132 is disordered; sequence LKQAAQSVNRPYQLDESNEQEPKIAPPQANIAETPTQSGDTHSKNNG.

It belongs to the TatB family. The Tat system comprises two distinct complexes: a TatABC complex, containing multiple copies of TatA, TatB and TatC subunits, and a separate TatA complex, containing only TatA subunits. Substrates initially bind to the TatABC complex, which probably triggers association of the separate TatA complex to form the active translocon.

Its subcellular location is the cell inner membrane. In terms of biological role, part of the twin-arginine translocation (Tat) system that transports large folded proteins containing a characteristic twin-arginine motif in their signal peptide across membranes. Together with TatC, TatB is part of a receptor directly interacting with Tat signal peptides. TatB may form an oligomeric binding site that transiently accommodates folded Tat precursor proteins before their translocation. The protein is Sec-independent protein translocase protein TatB of Shewanella denitrificans (strain OS217 / ATCC BAA-1090 / DSM 15013).